A 154-amino-acid chain; its full sequence is uncharacterized protein (154 aa).

Disordered stretches follow at residues 23–63 (ERVG…VVLK) and 79–154 (IKAA…DENE). A compositionally biased stretch (acidic residues) spans 43–56 (PDEDGDHSDKEDEQ). Phosphoserine is present on Ser-50. Lys-108 carries the N6-acetyllysine modification. A Phosphoserine modification is found at Ser-146.

This is an uncharacterized protein from Homo sapiens (Human).